The following is a 242-amino-acid chain: UPF0246 protein SPCG_1533 (242 aa).

The protein belongs to the UPF0246 family.

The sequence is that of UPF0246 protein SPCG_1533 from Streptococcus pneumoniae (strain CGSP14).